The chain runs to 247 residues: GTP cyclohydrolase 1 type 2 homolog (247 aa).

The a divalent metal cation site is built by His-63, His-64, Asp-101, His-215, and Glu-219.

Belongs to the GTP cyclohydrolase I type 2/NIF3 family. As to quaternary structure, homohexamer.

This is GTP cyclohydrolase 1 type 2 homolog from Buchnera aphidicola subsp. Baizongia pistaciae (strain Bp).